The following is a 284-amino-acid chain: MSVEKNTRQLEKDIVRDFSSRMSYASYLQLPTLLSAQQPVSNPEHHDEMLFIIQHQTTELWLKLVLHELRSAAAWLRSDDLGSALKAIARVKHIQKTLTEQWSVLATLTPTEYSQFRRFLGNSSGFQSSQYRAVEFVLGNKNRKMLPVFESDPEAYQQLSNVLEAPSIYDEFLAYLNRQGFDIPTSLLERDVTKAHQFCPELVPVFKHIYENAADNWGAYEACEELVDLEDNFQLWRFRHLRTVQRTIGMKAGTGGSSGAAFLQKALELTFFPELFAVRTEIGQ.

Substrate is bound by residues 51–55 (FIIQH), tyrosine 113, and arginine 117. Histidine 240 lines the heme pocket. Substrate is bound at residue threonine 254.

Belongs to the tryptophan 2,3-dioxygenase family. As to quaternary structure, homotetramer. Requires heme as cofactor.

It carries out the reaction L-tryptophan + O2 = N-formyl-L-kynurenine. Its pathway is amino-acid degradation; L-tryptophan degradation via kynurenine pathway; L-kynurenine from L-tryptophan: step 1/2. Functionally, heme-dependent dioxygenase that catalyzes the oxidative cleavage of the L-tryptophan (L-Trp) pyrrole ring and converts L-tryptophan to N-formyl-L-kynurenine. Catalyzes the oxidative cleavage of the indole moiety. In Arthrobacter sp. (strain FB24), this protein is Tryptophan 2,3-dioxygenase.